We begin with the raw amino-acid sequence, 913 residues long: SUN domain-containing protein 1 (913 aa).

An LMNA-binding region spans residues 1–139 (MDFSRLHTYT…VLRHPVLDES (139 aa)). Residues 1-415 (MDFSRLHTYT…LTRCLRNICK (415 aa)) are Nuclear-facing. Phosphoserine occurs at positions 48 and 66. Over residues 69-81 (SQAIDSHISTSRA) the composition is skewed to polar residues. The disordered stretch occupies residues 69-120 (SQAIDSHISTSRATPAKGRETRTVKQRRSASKPAFSINHLSGKGLSSSTSHD). The span at 108–120 (LSGKGLSSSTSHD) shows a compositional bias: low complexity. Position 139 is a phosphoserine (serine 139). Residues 209–302 (SRVYSRDRTL…MTAGELSRVD (94 aa)) are SYNE2-binding. The EMD-binding stretch occupies residues 223–302 (VSFYLDRTLW…MTAGELSRVD (80 aa)). A helical transmembrane segment spans residues 416–436 (VFVLLLPLLLLLGAGVSLWGQ). At 437-913 (GNFFSLLPVL…RFRVHGEPIQ (477 aa)) the chain is on the perinuclear space side. Positions 456 to 485 (RVDDSKGMHRPGPLPPSPPPKVDHKASQWP) are disordered. Coiled-coil stretches lie at residues 491–533 (GQKV…EGLS) and 563–638 (HHDH…CEQA). Residues 703 to 913 (TSEAIVSAVN…RFRVHGEPIQ (211 aa)) form a sufficient for interaction with SYNE1 and SYNE2 region. Residues 751–912 (GGSILSTRCS…YRFRVHGEPI (162 aa)) form the SUN domain.

In terms of assembly, core component of the LINC complex which is composed of inner nuclear membrane SUN domain-containing proteins coupled to outer nuclear membrane KASH domain-containing nesprins. SUN and KASH domain-containing proteins seem to bind each other promiscuously; however, differentially expression of LINC complex constituents is giving rise to specific assemblies. At least SUN1/2-containing core LINC complexes are proposed to be hexameric composed of three protomers of each KASH and SUN domain-containing protein. Interacts with KASH5 (via the last 22 amino acids); this interaction mediates KASH5 telomere localization by forming a SUN1:KASH5 LINC complex. Isoform 5 is proposed to form a non-nuclear spermatogenesis-specific LINC complex with SYNE3 during sperm head formation. Interacts with SYNE2 and SYNE1; probably forming respective LINC complexes. Interacts with A-type lamin with a strong preference for unprocessed A-type lamin compared with the mature protein. Interaction with lamins B1 and C is hardly detectable. Interacts with NAT10. Interacts with EMD and TSNAX. Associates with the nuclear pore complex (NPC). Interacts with CCDC79/TERB1; promoting the accumulation of the LINC complex complexes at the telomere-nuclear envelope attachment sites. Interacts with IRAG2. Interacts (via KASH domain) with TMEM258. In terms of processing, the disulfide bond with KASH domain-containing nesprins is required for stability of the respective LINC complexes under tensile forces. In terms of tissue distribution, widely expressed. Expressed in cochlear outer hair cells (at protein level). Seven isoforms are expressed in testis including testis-specific isoform 5. Isoform 5 is the only isoform expressed at the end of sperm differentiation. Six isoforms are expressed in muscle, heart and brain, four isoforms in kidney and three isoforms in liver.

It localises to the nucleus inner membrane. The protein resides in the cytoplasmic vesicle. It is found in the secretory vesicle. Its subcellular location is the acrosome outer membrane. Functionally, as a component of the LINC (LInker of Nucleoskeleton and Cytoskeleton) complex involved in the connection between the nuclear lamina and the cytoskeleton. The nucleocytoplasmic interactions established by the LINC complex play an important role in the transmission of mechanical forces across the nuclear envelope and in nuclear movement and positioning. Required for interkinetic nuclear migration (INM) and essential for nucleokinesis and centrosome-nucleus coupling during radial neuronal migration in the cerebral cortex and during glial migration. Involved in telomere attachment to nuclear envelope in the prophase of meiosis implicating a SUN1/2:KASH5 LINC complex in which SUN1 and SUN2 seem to act at least partial redundantly. Required for gametogenesis and involved in selective gene expression of coding and non-coding RNAs needed for gametogenesis. Helps to define the distribution of nuclear pore complexes (NPCs). Required for efficient localization of SYNE4 in the nuclear envelope. May be involved in nuclear remodeling during sperm head formation in spermatogenesis. May play a role in DNA repair by suppressing non-homologous end joining repair to facilitate the repair of DNA cross-links. In terms of biological role, isoform 5 may be involved in nuclear remodeling during sperm head formation in spermatogenesis. A probable SUN1 isoform 5:SYNE3 LINC complex may tether spermatid nuclei to anterior cytoskeletal structures such as actin filaments present at membraneous junctions of spermatids and Sertoli cells. The protein is SUN domain-containing protein 1 of Mus musculus (Mouse).